We begin with the raw amino-acid sequence, 571 residues long: Probable serine/threonine-protein kinase WNK4 (571 aa).

Positions 19–277 (GRFAEILGRG…AKELLQDPFL (259 aa)) constitute a Protein kinase domain. ATP contacts are provided by residues 99–102 (TELF) and Lys-149. Asp-166 (proton acceptor) is an active-site residue. The segment at 396 to 425 (EDDETPHDHHRHRTDSFHSSSSHASSSQAS) is disordered. Low complexity predominate over residues 412–425 (FHSSSSHASSSQAS). A Phosphoserine modification is found at Ser-522.

The protein belongs to the protein kinase superfamily. Ser/Thr protein kinase family. WNK subfamily.

The enzyme catalyses L-seryl-[protein] + ATP = O-phospho-L-seryl-[protein] + ADP + H(+). It carries out the reaction L-threonyl-[protein] + ATP = O-phospho-L-threonyl-[protein] + ADP + H(+). In terms of biological role, may regulate flowering time by modulating the photoperiod pathway. The polypeptide is Probable serine/threonine-protein kinase WNK4 (WNK4) (Arabidopsis thaliana (Mouse-ear cress)).